A 168-amino-acid chain; its full sequence is Short form salivary protein D7R2 (168 aa).

An N-terminal signal peptide occupies residues 1 to 21 (MFKKLLLSVGLVWCLISLGQA). Intrachain disulfides connect Cys-30/Cys-62, Cys-43/Cys-168, and Cys-101/Cys-120. Noradrenaline is bound by residues Glu-31 and Arg-46. Residue Glu-31 participates in serotonin binding. Serotonin-binding residues include His-59, Tyr-118, Asp-135, and Glu-138. Tyr-118, Asp-135, and Glu-138 together coordinate histamine. Asp-135 and Glu-138 together coordinate noradrenaline.

This sequence belongs to the PBP/GOBP family. As to expression, female saliva (at protein level). Female salivary gland. Not detected in female carcass without salivary glands. Not detected in male tissues.

It localises to the secreted. In terms of biological role, modulates blood feeding of female mosquitoes on vertebrate species by binding and sequestering different mediators involved in the host response. Binds serotonin, noradrenaline, histamine and adrenaline. Inhibits histamine-, serotonin- and noradrenaline-induced smooth muscle contraction. Exhibits vasodilating activity. This is Short form salivary protein D7R2 from Anopheles gambiae (African malaria mosquito).